We begin with the raw amino-acid sequence, 346 residues long: 3 beta-hydroxysteroid dehydrogenase/Delta 5--&gt;4-isomerase (346 aa).

Catalysis depends on Y147, which acts as the Proton acceptor. K151 provides a ligand contact to NAD(+).

Belongs to the 3-beta-HSD family.

The catalysed reaction is a 3beta-hydroxy-Delta(5)-steroid + NAD(+) = a 3-oxo-Delta(5)-steroid + NADH + H(+). It carries out the reaction a 3-oxo-Delta(5)-steroid = a 3-oxo-Delta(4)-steroid. The protein operates within lipid metabolism; steroid biosynthesis. Functionally, catalyzes the oxidative conversion of Delta(5)-ene-3-beta-hydroxy steroid, and the oxidative conversion of ketosteroids. The 3-beta-HSD enzymatic system plays a crucial role in the biosynthesis of all classes of hormonal steroids. During viral infection, steroid production contributes to virulence by inhibiting the host inflammatory response. The sequence is that of 3 beta-hydroxysteroid dehydrogenase/Delta 5--&gt;4-isomerase (OPG174) from Homo sapiens (Human).